We begin with the raw amino-acid sequence, 249 residues long: MEKTLKGIVLNSFDFQDYDKIITIYSNLYGKISLVCLGVNKIKSKNKYGINYLSYSNFEIFKSKNKFNLSKLKRSELINSFNHISTDFNLYLYANIITSLVLSLDEQIKNYNLYKTLKLSISIINNKSDFGLKVCVLFMFYFLKIIGNQIDLSKCGFCNSKINPIIAISFTNYCSSCKFCYFDDCILIDNQLSNFINSIFKNDFITNLSQEISTNNLNILTRFILNYYQDIVGTYTTSMYLLSTLIRFN.

Belongs to the RecO family.

In terms of biological role, involved in DNA repair and RecF pathway recombination. This chain is DNA repair protein RecO, found in Mycoplasma mycoides subsp. mycoides SC (strain CCUG 32753 / NCTC 10114 / PG1).